The sequence spans 154 residues: Prefoldin subunit alpha (154 aa).

The interval 123–154 is disordered; it reads EAEQLEQQAQQAQQQMMQQQMQAQQQPQDGEQ. The segment covering 127 to 154 has biased composition (low complexity); that stretch reads LEQQAQQAQQQMMQQQMQAQQQPQDGEQ.

The protein belongs to the prefoldin alpha subunit family. Heterohexamer of two alpha and four beta subunits.

The protein resides in the cytoplasm. Functionally, molecular chaperone capable of stabilizing a range of proteins. Seems to fulfill an ATP-independent, HSP70-like function in archaeal de novo protein folding. The polypeptide is Prefoldin subunit alpha (Halobacterium salinarum (strain ATCC 29341 / DSM 671 / R1)).